Reading from the N-terminus, the 536-residue chain is DNA damage-binding protein CMR1 (536 aa).

A compositionally biased stretch (basic and acidic residues) spans 36–45 (REAGVDDTHR). A disordered region spans residues 36–72 (REAGVDDTHRTVVKKKKSPSVSRGRSASPKVAPVATR). WD repeat units follow at residues 195-236 (LVYE…LSEN), 251-291 (FFTK…SNDI), 346-386 (LSDK…KKPE), 403-442 (DSRLSVSAVSYSPTDNTLVCNGYDDTIRLFDVGSDNLPDD), 456-495 (GRWTSILKARFKQDQDVFAIANMKRAIDIYDSQGQQLAHL), and 496-535 (PTATVPAVISWHPLRNWIAGGNSSGKIFLFTDETVKKEEE).

This sequence belongs to the WD repeat DDB2/WDR76 family.

In terms of biological role, DNA-binding protein that binds to both single- and double-stranded DNA. Binds preferentially to UV-damaged DNA. May be involved in DNA-metabolic processes. In Vanderwaltozyma polyspora (strain ATCC 22028 / DSM 70294 / BCRC 21397 / CBS 2163 / NBRC 10782 / NRRL Y-8283 / UCD 57-17) (Kluyveromyces polysporus), this protein is DNA damage-binding protein CMR1.